Here is a 591-residue protein sequence, read N- to C-terminus: L-fucose isomerase (591 aa).

Catalysis depends on proton acceptor residues E337 and D361. The Mn(2+) site is built by E337, D361, and H528.

It belongs to the L-fucose isomerase family. As to quaternary structure, homohexamer. The cofactor is Mn(2+).

It is found in the cytoplasm. The catalysed reaction is L-fucose = L-fuculose. It functions in the pathway carbohydrate degradation; L-fucose degradation; L-lactaldehyde and glycerone phosphate from L-fucose: step 1/3. Functionally, converts the aldose L-fucose into the corresponding ketose L-fuculose. The chain is L-fucose isomerase from Salmonella heidelberg (strain SL476).